The sequence spans 332 residues: 4-hydroxy-3-methylbut-2-enyl diphosphate reductase (332 aa).

Cys-34 is a [4Fe-4S] cluster binding site. (2E)-4-hydroxy-3-methylbut-2-enyl diphosphate contacts are provided by His-63 and His-96. 2 residues coordinate dimethylallyl diphosphate: His-63 and His-96. Residues His-63 and His-96 each contribute to the isopentenyl diphosphate site. Cys-118 is a [4Fe-4S] cluster binding site. His-146 contacts (2E)-4-hydroxy-3-methylbut-2-enyl diphosphate. His-146 contributes to the dimethylallyl diphosphate binding site. Residue His-146 participates in isopentenyl diphosphate binding. The Proton donor role is filled by Glu-148. Residue Thr-186 participates in (2E)-4-hydroxy-3-methylbut-2-enyl diphosphate binding. Cys-216 contributes to the [4Fe-4S] cluster binding site. 4 residues coordinate (2E)-4-hydroxy-3-methylbut-2-enyl diphosphate: Ser-244, Ser-245, Asn-246, and Ser-289. The dimethylallyl diphosphate site is built by Ser-244, Ser-245, Asn-246, and Ser-289. Isopentenyl diphosphate contacts are provided by Ser-244, Ser-245, Asn-246, and Ser-289.

The protein belongs to the IspH family. It depends on [4Fe-4S] cluster as a cofactor.

It carries out the reaction isopentenyl diphosphate + 2 oxidized [2Fe-2S]-[ferredoxin] + H2O = (2E)-4-hydroxy-3-methylbut-2-enyl diphosphate + 2 reduced [2Fe-2S]-[ferredoxin] + 2 H(+). The enzyme catalyses dimethylallyl diphosphate + 2 oxidized [2Fe-2S]-[ferredoxin] + H2O = (2E)-4-hydroxy-3-methylbut-2-enyl diphosphate + 2 reduced [2Fe-2S]-[ferredoxin] + 2 H(+). It participates in isoprenoid biosynthesis; dimethylallyl diphosphate biosynthesis; dimethylallyl diphosphate from (2E)-4-hydroxy-3-methylbutenyl diphosphate: step 1/1. Its pathway is isoprenoid biosynthesis; isopentenyl diphosphate biosynthesis via DXP pathway; isopentenyl diphosphate from 1-deoxy-D-xylulose 5-phosphate: step 6/6. In terms of biological role, catalyzes the conversion of 1-hydroxy-2-methyl-2-(E)-butenyl 4-diphosphate (HMBPP) into a mixture of isopentenyl diphosphate (IPP) and dimethylallyl diphosphate (DMAPP). Acts in the terminal step of the DOXP/MEP pathway for isoprenoid precursor biosynthesis. The chain is 4-hydroxy-3-methylbut-2-enyl diphosphate reductase from Mycobacterium ulcerans (strain Agy99).